Here is a 183-residue protein sequence, read N- to C-terminus: Caltractin ICL1f (183 aa).

The segment covering 1 to 19 (MARRGQQPPQQQQQAQPAQ) has biased composition (low complexity). Positions 1–30 (MARRGQQPPQQQQQAQPAQKNQAGKFNPAE) are disordered. EF-hand domains follow at residues 39–74 (EEVLEIKEAFDLFDTDGTQSIDPKELKAAMTSLGFE), 75–110 (AKNQTIYQMISDLDTDGSGQIDFAEFLKLMTARISE), 112–147 (DSKADIQKVFNLFDSERAGFITLKDLRKVAKELGET), and 148–183 (MDDSELQEMIDRADSDGDTQVTFEDFYNIMTKKTFA). Residues Asp52, Asp54, Thr56, Ser58, Glu63, Asp88, Asp90, Ser92, Gln94, and Glu99 each coordinate Ca(2+).

This sequence belongs to the centrin family. As to quaternary structure, monomer.

The protein localises to the cytoplasm. The protein resides in the cytoskeleton. Functionally, plays a fundamental role in microtubule organizing center structure and function. Component of the infraciliary lattice (ICL) and the ciliary basal bodies. The chain is Caltractin ICL1f (Icl1f) from Paramecium tetraurelia.